Here is an 81-residue protein sequence, read N- to C-terminus: Photosystem I iron-sulfur center (81 aa).

4Fe-4S ferredoxin-type domains are found at residues 2 to 31 (AHTV…MVPW) and 39 to 68 (MASA…IRVY). [4Fe-4S] cluster contacts are provided by Cys-11, Cys-14, Cys-17, Cys-21, Cys-48, Cys-51, Cys-54, and Cys-58.

In terms of assembly, the eukaryotic PSI reaction center is composed of at least 11 subunits. Requires [4Fe-4S] cluster as cofactor.

It is found in the plastid. It localises to the chloroplast thylakoid membrane. The catalysed reaction is reduced [plastocyanin] + hnu + oxidized [2Fe-2S]-[ferredoxin] = oxidized [plastocyanin] + reduced [2Fe-2S]-[ferredoxin]. Apoprotein for the two 4Fe-4S centers FA and FB of photosystem I (PSI); essential for photochemical activity. FB is the terminal electron acceptor of PSI, donating electrons to ferredoxin. The C-terminus interacts with PsaA/B/D and helps assemble the protein into the PSI complex. Required for binding of PsaD and PsaE to PSI. PSI is a plastocyanin/cytochrome c6-ferredoxin oxidoreductase, converting photonic excitation into a charge separation, which transfers an electron from the donor P700 chlorophyll pair to the spectroscopically characterized acceptors A0, A1, FX, FA and FB in turn. The protein is Photosystem I iron-sulfur center of Cyanidioschyzon merolae (strain NIES-3377 / 10D) (Unicellular red alga).